A 356-amino-acid chain; its full sequence is MSCPAAAVLTPDMRAFLRRFHEEMGEPGLPARLRAVEEAGLWWPTSAELTWGAKVAWRNSTRCVGRLYWEALSVRDLRELNTAQAVYEALLQHLDDAFCGGHIRPVISVFGPGVRLHNPQLIRYADDPINADFVDKLRRFGWQPRGERFEVLPLLIEVNGRAELFSLPPQAVQEVAITHPVCLGIGELGLRWHALPVISDMHLDIGGLHLPCAFSGWYVQTEIAARDLADVGRYDQLPAVARALGLDTSRERTLWRDRALVELNVAVLHSFDAAGVKLADHHTVTAHHVRFEEREARAGREVRGKWSWLVPPLSPATTPLWSRRYRAREESPRFVRARCPFHTPTVHASTGHAPTG.

C63 provides a ligand contact to heme.

This sequence belongs to the NOS family. Bacterial NOS oxygenase subfamily. In terms of assembly, homodimer. Forms a complex with trpS2; one homodimer of trpS2 binds one homodimer of nos. Requires heme as cofactor. The cofactor is (6S)-5,6,7,8-tetrahydrofolate.

It catalyses the reaction 3 reduced [flavodoxin] + 2 L-arginine + 4 O2 = 3 oxidized [flavodoxin] + 2 L-citrulline + 2 nitric oxide + 4 H2O + 5 H(+). With respect to regulation, nitric oxide synthase activity is increased by trpS2. Catalyzes the production of nitric oxide. The complex between TrpRS II and nitric oxide synthase oxygenase catalyzes the regioselective nitration of tryptophan at the 4-position. The sequence is that of Nitric oxide synthase oxygenase (nos) from Deinococcus radiodurans (strain ATCC 13939 / DSM 20539 / JCM 16871 / CCUG 27074 / LMG 4051 / NBRC 15346 / NCIMB 9279 / VKM B-1422 / R1).